A 396-amino-acid polypeptide reads, in one-letter code: Elongation factor Tu 1 (396 aa).

The 197-residue stretch at 10–206 (KPHCNIGTIG…TVDDYIPQPD (197 aa)) folds into the tr-type G domain. The interval 19–26 (GHVDHGKT) is G1. 19–26 (GHVDHGKT) provides a ligand contact to GTP. Threonine 26 contributes to the Mg(2+) binding site. A G2 region spans residues 60-64 (GITIN). Positions 81–84 (DCPG) are G3. Residues 81–85 (DCPGH) and 136–139 (NKVD) contribute to the GTP site. Residues 136–139 (NKVD) form a G4 region. The segment at 174 to 176 (SAK) is G5.

This sequence belongs to the TRAFAC class translation factor GTPase superfamily. Classic translation factor GTPase family. EF-Tu/EF-1A subfamily. Monomer.

The protein resides in the cytoplasm. It catalyses the reaction GTP + H2O = GDP + phosphate + H(+). Its function is as follows. GTP hydrolase that promotes the GTP-dependent binding of aminoacyl-tRNA to the A-site of ribosomes during protein biosynthesis. The protein is Elongation factor Tu 1 of Caulobacter sp. (strain K31).